Here is a 263-residue protein sequence, read N- to C-terminus: MPLPVALQTRLAKRGILKHLEPEPEEEIIAEDYDDDPVDYEATRLEGLPPSWYKVFDPSCGLPYYWNVDTDLVSWLSPHDPNSVVTKSAKKLRSSNADAEEKLDRSHEKSDRGHEKSDRGHEKSDRSHEKSERNHEKSDRDRERGYDKVDRERERDRDRDRGYDKVDREESKERRHHRREELAPYPKSKKAASRKDEELDPMDPSSYSDAPRGTWSTGLPKRNEAKTGADTTAAGPLFQQRPYPSPGAVLRANAEASRTKQQD.

In terms of domain architecture, WW spans 46 to 80 (EGLPPSWYKVFDPSCGLPYYWNVDTDLVSWLSPHD). S94 is modified (phosphoserine). Residues 94–263 (SSNADAEEKL…AEASRTKQQD (170 aa)) form a disordered region. Over residues 99–173 (AEEKLDRSHE…DKVDREESKE (75 aa)) the composition is skewed to basic and acidic residues. Tandem repeats lie at residues 104–110 (DRSHEKS), 111–117 (DRGHEKS), 118–124 (DRGHEKS), 125–131 (DRSHEKS), 132–138 (ERNHEKS), 139–140 (DR), 141–142 (DR), 143–144 (ER), 150–151 (DR), 152–153 (ER), 154–155 (ER), 156–157 (DR), 158–159 (DR), and 160–161 (DR). A 5 X 7 AA approximate tandem repeats of D-R-[SG]-H-D-K-S region spans residues 104–138 (DRSHEKSDRGHEKSDRGHEKSDRSHEKSERNHEKS). Residues 139–144 (DRDRER) are 3 X 2 AA tandem repeats of [DE]-R. The 6 X 2 AA tandem repeats of [DE]-R stretch occupies residues 150-161 (DRERERDRDRDR). Residues 243–253 (YPSPGAVLRAN) are important for interaction with TXNL4A. The residue at position 245 (S245) is a Phosphoserine.

Interacts with POU3F2/Brn-2, ATXN1, TXNL4A, HTT and AR. Interaction with ATXN1 correlates positively with the length of the polyglutamine tract. Interacts with RNA polymerase II large subunit in a phosphorylation-dependent manner. Forms a ternary complex with ATXN1 mutant and phosphorylated RNA polymerase II. Interacts (via C-terminus) with TXNL4A and CD2BP2. Interacts (via WW domain) with ATN1 and SF3B1, and may interact with additional splice factors. Interacts (via WW domain) with WBP11; Leading to reduce interaction between PQBP1 and TXNL4A. Interacts with CAPRIN1. Interacts with DDX1. Interacts with SFPQ. Interacts with KHSRP.

Its subcellular location is the nucleus. The protein localises to the nucleus speckle. It localises to the cytoplasmic granule. In terms of biological role, intrinsically disordered protein that acts as a scaffold, and which is involved in different processes, such as pre-mRNA splicing, transcription regulation, innate immunity and neuron development. Interacts with splicing-related factors via the intrinsically disordered region and regulates alternative splicing of target pre-mRNA species. May suppress the ability of POU3F2 to transactivate the DRD1 gene in a POU3F2 dependent manner. Can activate transcription directly or via association with the transcription machinery. May be involved in ATXN1 mutant-induced cell death. The interaction with ATXN1 mutant reduces levels of phosphorylated RNA polymerase II large subunit. Involved in the assembly of cytoplasmic stress granule, possibly by participating in the transport of neuronal RNA granules. Also acts as an innate immune sensor of infection by retroviruses, by detecting the presence of reverse-transcribed DNA in the cytosol. Directly binds retroviral reverse-transcribed DNA in the cytosol and interacts with CGAS, leading to activate the cGAS-STING signaling pathway, triggering type-I interferon production. This chain is Polyglutamine-binding protein 1 (PQBP1), found in Bos taurus (Bovine).